The chain runs to 1891 residues: Endoribonuclease Dicer-L (1891 aa).

One can recognise a Helicase ATP-binding domain in the interval 41-217 (LLEAALDHNT…DLEEKIQKLE (177 aa)). 54–61 (LNSGSGKT) lines the ATP pocket. The DECH box signature appears at 165-168 (DECH). The region spanning 425–594 (SFPSPFTNIL…SIDCGNTESE (170 aa)) is the Helicase C-terminal domain. The Dicer dsRNA-binding fold domain maps to 622–714 (AIGHINRYCA…MPVGKETVKY (93 aa)). One can recognise a PAZ domain in the interval 887-1034 (KFVEDIEKSE…LVPELCAIHP (148 aa)). 2 RNase III domains span residues 1248-1379 (TSDM…ETSG) and 1635-1793 (FENF…MDSG). Mg(2+) contacts are provided by glutamate 1292, aspartate 1370, glutamate 1373, glutamate 1674, aspartate 1779, and glutamate 1782. The DRBM domain occupies 1818–1883 (VPRSPVRELL…ARRALRSLKA (66 aa)).

Belongs to the helicase family. Dicer subfamily. Component of the RISC loading complex (RLC), or micro-RNA (miRNA) loading complex (miRLC), which is composed of dicer1, ago2 and tarbp2; dicer1 and tarbp2 are required to process precursor miRNAs (pre-miRNAs) to mature miRNAs and then load them onto ago2. Note that the trimeric RLC/miRLC is also referred to as RISC. The cofactor is Mg(2+). Mn(2+) is required as a cofactor.

Its subcellular location is the cytoplasm. The enzyme catalyses Endonucleolytic cleavage to 5'-phosphomonoester.. Double-stranded RNA (dsRNA) endoribonuclease playing a central role in short dsRNA-mediated post-transcriptional gene silencing. Cleaves naturally occurring long dsRNAs and short hairpin pre-microRNAs (miRNA) into fragments of 21 to 23 nucleotides with 3' overhang of two nucleotides, producing respectively short interfering RNAs (siRNA) and mature microRNAs. SiRNAs and miRNAs serve as guide to direct the RNA-induced silencing complex (RISC) to complementary RNAs to degrade them or prevent their translation. Gene silencing mediated by siRNAs, also called RNA interference, controls the elimination of transcripts from mobile and repetitive DNA elements of the genome but also the degradation of exogenous RNA of viral origin for instance. The miRNA pathway on the other side is a mean to specifically regulate the expression of target genes. During embryonic development, at the left-right organizer, post-transcriptionally regulates the expression of dand5 in flow sensor cells. In post-flow stages, acts along with Bicc1 to repress dand5 mRNA translation and decay. Decreased Dand5 expression lifts repression of Nodal and defines leftness by induction of the lateral plate mesoderm Nodal signaling cascade. This Xenopus laevis (African clawed frog) protein is Endoribonuclease Dicer-L (dicer1.L).